Here is a 334-residue protein sequence, read N- to C-terminus: O-methyltransferase SfmM3 (334 aa).

S-adenosyl-L-methionine-binding positions include Asp190 and 216-218 (GDF). Residue His236 is the Proton acceptor of the active site.

Belongs to the class I-like SAM-binding methyltransferase superfamily. Cation-independent O-methyltransferase family. COMT subfamily.

It carries out the reaction 5-hydroxy-3-methyl-L-tyrosine + S-adenosyl-L-methionine = 5-hydroxy-3-methyl-O-methyl-L-tyrosine + S-adenosyl-L-homocysteine + H(+). Its pathway is antibiotic biosynthesis. In terms of biological role, O-methyltransferase that mediates the methylation of 3-hydroxy-5-methyl-L-tyrosine (3-OH-5-Me-Tyr) into 3-hydroxy-5-methyl-O-methyltyrosine (3-OH-5-Me-OMe-Tyr), a core structure of saframycin A, a potent antitumor antibiotic that belongs to the tetrahydroisoquinoline family. This is O-methyltransferase SfmM3 from Streptomyces lavendulae.